Reading from the N-terminus, the 121-residue chain is Cysteine-rich neurotrophic factor (121 aa).

The first 18 residues, 1–18 (MLLKLIVALSLTLTLASA), serve as a signal peptide directing secretion. N-linked (GlcNAc...) asparagine glycosylation occurs at asparagine 57.

It localises to the secreted. Functionally, interacts with the p75 low-affinity neurotrophin receptor. Evokes neurite outgrowth and modulated calcium currents in pedal motor neurons. May be involved in target-derived trophic support for motor neurons. The chain is Cysteine-rich neurotrophic factor from Lymnaea stagnalis (Great pond snail).